The primary structure comprises 216 residues: Probable nicotinate-nucleotide adenylyltransferase (216 aa).

This sequence belongs to the NadD family.

The catalysed reaction is nicotinate beta-D-ribonucleotide + ATP + H(+) = deamido-NAD(+) + diphosphate. The protein operates within cofactor biosynthesis; NAD(+) biosynthesis; deamido-NAD(+) from nicotinate D-ribonucleotide: step 1/1. Catalyzes the reversible adenylation of nicotinate mononucleotide (NaMN) to nicotinic acid adenine dinucleotide (NaAD). In Geobacter metallireducens (strain ATCC 53774 / DSM 7210 / GS-15), this protein is Probable nicotinate-nucleotide adenylyltransferase.